Reading from the N-terminus, the 291-residue chain is Exosome complex component RRP42 (291 aa).

A2 is subject to N-acetylalanine. K116 carries the N6-acetyllysine modification. S177 carries the phosphoserine modification.

It belongs to the RNase PH family. In terms of assembly, component of the RNA exosome core complex (Exo-9), composed of EXOSC1, EXOSC2, EXOSC3, EXOSC4, EXOSC5, EXOSC6, EXOSC7, EXOSC8 and EXOSC9; within the complex interacts with EXOSC2 and EXOSC4. The catalytically inactive RNA exosome core complex (Exo-9) associates with the catalytic subunit EXOSC10/RRP6. Exo-9 may associate with DIS3 to form the nucleolar exosome complex, or DIS3L to form the cytoplasmic exosome complex. Exo-9 is formed by a hexameric base ring consisting of the heterodimers EXOSC4-EXOSC9, EXOSC5-EXOSC8 and EXOSC6-EXOSC7, and a cap ring consisting of EXOSC1, EXOSC2 and EXOSC3. The RNA exosome complex associates with cofactors C1D/RRP47, MPHOSPH6/MPP6 and MTREX/MTR4. Interacts with ZC3HAV1. Interacts with DIS3; the interaction is direct.

It localises to the nucleus. The protein resides in the nucleolus. Its subcellular location is the cytoplasm. In terms of biological role, non-catalytic component of the RNA exosome complex which has 3'-&gt;5' exoribonuclease activity and participates in a multitude of cellular RNA processing and degradation events. In the nucleus, the RNA exosome complex is involved in proper maturation of stable RNA species such as rRNA, snRNA and snoRNA, in the elimination of RNA processing by-products and non-coding 'pervasive' transcripts, such as antisense RNA species and promoter-upstream transcripts (PROMPTs), and of mRNAs with processing defects, thereby limiting or excluding their export to the cytoplasm. The RNA exosome may be involved in Ig class switch recombination (CSR) and/or Ig variable region somatic hypermutation (SHM) by targeting AICDA deamination activity to transcribed dsDNA substrates. In the cytoplasm, the RNA exosome complex is involved in general mRNA turnover and specifically degrades inherently unstable mRNAs containing AU-rich elements (AREs) within their 3' untranslated regions, and in RNA surveillance pathways, preventing translation of aberrant mRNAs. It seems to be involved in degradation of histone mRNA. The catalytic inactive RNA exosome core complex of 9 subunits (Exo-9) is proposed to play a pivotal role in the binding and presentation of RNA for ribonucleolysis, and to serve as a scaffold for the association with catalytic subunits and accessory proteins or complexes. The chain is Exosome complex component RRP42 (EXOSC7) from Homo sapiens (Human).